The chain runs to 424 residues: N-succinylarginine dihydrolase (424 aa).

Substrate contacts are provided by residues 19–28, asparagine 110, and 137–138; these read AGLSPGNIAS and HR. Glutamate 174 is an active-site residue. Residue arginine 207 coordinates substrate. Histidine 240 is a catalytic residue. Substrate contacts are provided by aspartate 242 and asparagine 349. Residue cysteine 355 is the Nucleophile of the active site.

The protein belongs to the succinylarginine dihydrolase family. As to quaternary structure, homodimer.

It carries out the reaction N(2)-succinyl-L-arginine + 2 H2O + 2 H(+) = N(2)-succinyl-L-ornithine + 2 NH4(+) + CO2. It participates in amino-acid degradation; L-arginine degradation via AST pathway; L-glutamate and succinate from L-arginine: step 2/5. Functionally, catalyzes the hydrolysis of N(2)-succinylarginine into N(2)-succinylornithine, ammonia and CO(2). In Rhizorhabdus wittichii (strain DSM 6014 / CCUG 31198 / JCM 15750 / NBRC 105917 / EY 4224 / RW1) (Sphingomonas wittichii), this protein is N-succinylarginine dihydrolase.